The primary structure comprises 390 residues: UPF0229 protein Cbei_0567 (390 aa).

Residues 77–108 are disordered; sequence SGVGNEKRGEKLGNGNKKLAKGNQGAGNEEGD. Over residues 89–103 the composition is skewed to low complexity; that stretch reads GNGNKKLAKGNQGAG.

This sequence belongs to the UPF0229 family.

This chain is UPF0229 protein Cbei_0567, found in Clostridium beijerinckii (strain ATCC 51743 / NCIMB 8052) (Clostridium acetobutylicum).